The sequence spans 253 residues: E3 ubiquitin-protein ligase MARCHF3 (253 aa).

The RING-CH-type zinc-finger motif lies at 63-123; it reads SPFNDRPMCR…ELCHFRFAVE (61 aa). The Zn(2+) site is built by Cys71, Cys74, Cys87, Cys89, His97, Cys100, Cys113, and Cys116. 2 consecutive transmembrane segments (helical) span residues 145 to 165 and 182 to 202; these read LFGDMVCFLFITPLATISGWL and AVGLIALTVALFTIYLFWTLV. Residues Ser237 and Ser243 each carry the phosphoserine modification.

In terms of assembly, interacts with MARCHF2 and STX6.

It is found in the cytoplasmic vesicle membrane. The protein localises to the early endosome membrane. The catalysed reaction is S-ubiquitinyl-[E2 ubiquitin-conjugating enzyme]-L-cysteine + [acceptor protein]-L-lysine = [E2 ubiquitin-conjugating enzyme]-L-cysteine + N(6)-ubiquitinyl-[acceptor protein]-L-lysine.. The protein operates within protein modification; protein ubiquitination. E3 ubiquitin-protein ligase which may be involved in endosomal trafficking. E3 ubiquitin ligases accept ubiquitin from an E2 ubiquitin-conjugating enzyme in the form of a thioester and then directly transfer the ubiquitin to targeted substrates. In Bos taurus (Bovine), this protein is E3 ubiquitin-protein ligase MARCHF3 (MARCHF3).